A 324-amino-acid polypeptide reads, in one-letter code: Type II restriction enzyme AplI (324 aa).

It belongs to the BsuBI/PstI type II restriction endonuclease family. Requires Mg(2+) as cofactor.

It catalyses the reaction Endonucleolytic cleavage of DNA to give specific double-stranded fragments with terminal 5'-phosphates.. Activated by K(+) and Na(+) ions, whereas NH(4)(+) ions appear to inhibit endonuclease activity. Functionally, a P subtype restriction enzyme that recognizes the double-stranded sequence 5'-CTGCAG-3' and cleaves after A-5. The protein is Type II restriction enzyme AplI (aplIR) of Arthrospira platensis (strain NIES-39 / UTEX 3086 / IAM M-135) (Spirulina platensis).